Reading from the N-terminus, the 399-residue chain is Tyrosine--tRNA ligase 2 (399 aa).

A 'HIGH' region motif is present at residues 41-50 (PTAPDLHLGH). Residues 225 to 229 (KMSKS) carry the 'KMSKS' region motif. Lysine 228 contributes to the ATP binding site. An S4 RNA-binding domain is found at 336–398 (ILIANLLKEA…GKRKFANITV (63 aa)).

Belongs to the class-I aminoacyl-tRNA synthetase family. TyrS type 2 subfamily. Homodimer.

It localises to the cytoplasm. The catalysed reaction is tRNA(Tyr) + L-tyrosine + ATP = L-tyrosyl-tRNA(Tyr) + AMP + diphosphate + H(+). Functionally, catalyzes the attachment of tyrosine to tRNA(Tyr) in a two-step reaction: tyrosine is first activated by ATP to form Tyr-AMP and then transferred to the acceptor end of tRNA(Tyr). In Pseudoalteromonas translucida (strain TAC 125), this protein is Tyrosine--tRNA ligase 2.